The sequence spans 362 residues: Neutral protease 2 homolog MEP2 (362 aa).

The first 19 residues, 1–19 (MLFPSIVAALAALANPVLS), serve as a signal peptide directing secretion. Positions 20 to 177 (LTIPQATGSE…SKAINPISAR (158 aa)) are excised as a propeptide. 2 disulfides stabilise this stretch: Cys-184–Cys-255 and Cys-262–Cys-280. His-304 serves as a coordination point for Zn(2+). Glu-305 is a catalytic residue. Zn(2+)-binding residues include His-308 and Asp-319.

The protein belongs to the peptidase M35 family. It depends on Zn(2+) as a cofactor.

The protein resides in the secreted. The catalysed reaction is Preferential cleavage of bonds with hydrophobic residues in P1'. Also 3-Asn-|-Gln-4 and 8-Gly-|-Ser-9 bonds in insulin B chain.. Functionally, secreted metalloproteinase that allows assimilation of proteinaceous substrates. Shows high activities on basic nuclear substrates such as histone and protamine. May be involved in virulence. In Coccidioides posadasii (strain C735) (Valley fever fungus), this protein is Neutral protease 2 homolog MEP2 (MEP2).